A 310-amino-acid chain; its full sequence is MAKVTANDLLERFQLELLSGEEGIHRSITTSDISRPGIEMAGFFTYYPAKRLQLLGRTELSFYKQLSPVDKEERMSKLCTYDTPGIIISRGLEVPPELLKASEKVGVPVLRSNITTTRLSSMLTNFLESQLAPTTAVHGVLVDIYGIGVLITGSSGVGKSETALDLVRRGHRLVADDSVEIRREHEDTLVGRSPELIQHLLEIRGLGIINVMTLFGAGAVRPFKRIALCVNLELWDQKKVYDRLGLSEDYLRIMNVDIPKLTIPVRPGRNLAVIIEVAAMNFRLKRLGINAAQQFSDRLNDVIEEGEQEF.

Active-site residues include H138 and K159. 153–160 contacts ATP; sequence GSSGVGKS. S160 is a Mg(2+) binding site. The active-site Proton acceptor; for phosphorylation activity. Proton donor; for dephosphorylation activity is the D177. An important for the catalytic mechanism of both phosphorylation and dephosphorylation region spans residues 201 to 210; sequence LEIRGLGIIN. Mg(2+) is bound at residue E202. The active site involves R243. The tract at residues 264 to 269 is important for the catalytic mechanism of dephosphorylation; that stretch reads PVRPGR.

This sequence belongs to the HPrK/P family. As to quaternary structure, homohexamer. The cofactor is Mg(2+).

It carries out the reaction [HPr protein]-L-serine + ATP = [HPr protein]-O-phospho-L-serine + ADP + H(+). It catalyses the reaction [HPr protein]-O-phospho-L-serine + phosphate + H(+) = [HPr protein]-L-serine + diphosphate. Catalyzes the ATP- as well as the pyrophosphate-dependent phosphorylation of a specific serine residue in HPr, a phosphocarrier protein of the phosphoenolpyruvate-dependent sugar phosphotransferase system (PTS). HprK/P also catalyzes the pyrophosphate-producing, inorganic phosphate-dependent dephosphorylation (phosphorolysis) of seryl-phosphorylated HPr (P-Ser-HPr). The two antagonistic activities of HprK/P are regulated by several intracellular metabolites, which change their concentration in response to the absence or presence of rapidly metabolisable carbon sources (glucose, fructose, etc.) in the growth medium. Also phosphorylates/dephosphorylates the HPr-like catabolite repression protein crh on a specific serine residue. Therefore, by controlling the phosphorylation state of HPr and crh, HPrK/P is a sensor enzyme that plays a major role in the regulation of carbon metabolism and sugar transport: it mediates carbon catabolite repression (CCR), and regulates PTS-catalyzed carbohydrate uptake and inducer exclusion. In Halalkalibacterium halodurans (strain ATCC BAA-125 / DSM 18197 / FERM 7344 / JCM 9153 / C-125) (Bacillus halodurans), this protein is HPr kinase/phosphorylase (hprK).